We begin with the raw amino-acid sequence, 783 residues long: BMP/retinoic acid-inducible neural-specific protein 2 (783 aa).

The N-terminal stretch at 1–33 (MRWQCGTRFRGLRPAVAPWTALLALGLPGWVLA) is a signal peptide. In terms of domain architecture, MACPF spans 85–281 (RYRIYREFAR…FVAAALSYIT (197 aa)). N-linked (GlcNAc...) asparagine glycans are attached at residues asparagine 185, asparagine 354, asparagine 473, asparagine 579, asparagine 626, and asparagine 658.

It belongs to the BRINP family.

It is found in the secreted. In terms of biological role, inhibits neuronal cell proliferation by negative regulation of the cell cycle transition. This is BMP/retinoic acid-inducible neural-specific protein 2 (BRINP2) from Homo sapiens (Human).